Reading from the N-terminus, the 159-residue chain is MQCPTCQNTDSRVLESRSADTGKSVRRRRECLNCSFRFTTYERVETMPISVLKKDGSRELFNKDKLVTGISRACEKTTFSREAIIDFVDSIESQIIQDSNKDIKSSQIGELILKGLRKENEVAYIRYASVYRKFNGVKDFVSTLESLKGSSKNELASIL.

The segment at 3–34 (CPTCQNTDSRVLESRSADTGKSVRRRRECLNC) is a zinc-finger region. The ATP-cone domain occupies 49-139 (ISVLKKDGSR…VYRKFNGVKD (91 aa)).

It belongs to the NrdR family. Zn(2+) serves as cofactor.

Negatively regulates transcription of bacterial ribonucleotide reductase nrd genes and operons by binding to NrdR-boxes. This chain is Transcriptional repressor NrdR, found in Prochlorococcus marinus (strain MIT 9515).